We begin with the raw amino-acid sequence, 861 residues long: Bifunctional uridylyltransferase/uridylyl-removing enzyme (861 aa).

The uridylyltransferase stretch occupies residues 1–321 (MKNDNRIIKN…VYHQKQKIIR (321 aa)). Residues 322-678 (LDDEFQLSNR…IMPHHSQGGT (357 aa)) are uridylyl-removing. The region spanning 440-562 (VDQHTLFVIR…LPHARYLDYL (123 aa)) is the HD domain. 2 ACT domains span residues 679-760 (EVFI…AVSR) and 788-861 (QLFL…KSKY).

Belongs to the GlnD family. The cofactor is Mg(2+).

The catalysed reaction is [protein-PII]-L-tyrosine + UTP = [protein-PII]-uridylyl-L-tyrosine + diphosphate. It carries out the reaction [protein-PII]-uridylyl-L-tyrosine + H2O = [protein-PII]-L-tyrosine + UMP + H(+). With respect to regulation, uridylyltransferase (UTase) activity is inhibited by glutamine, while glutamine activates uridylyl-removing (UR) activity. Its function is as follows. Modifies, by uridylylation and deuridylylation, the PII regulatory proteins (GlnB and homologs), in response to the nitrogen status of the cell that GlnD senses through the glutamine level. Under low glutamine levels, catalyzes the conversion of the PII proteins and UTP to PII-UMP and PPi, while under higher glutamine levels, GlnD hydrolyzes PII-UMP to PII and UMP (deuridylylation). Thus, controls uridylylation state and activity of the PII proteins, and plays an important role in the regulation of nitrogen assimilation and metabolism. In Legionella pneumophila (strain Corby), this protein is Bifunctional uridylyltransferase/uridylyl-removing enzyme.